Reading from the N-terminus, the 312-residue chain is D-alanine--D-alanine ligase (312 aa).

Positions 108–308 (KLVWQQTGIP…YSELVVKVLS (201 aa)) constitute an ATP-grasp domain. ATP is bound at residue 138–193 (AAKLGVPLFVKPASEGSSVAVEKVKSADALPAALEEAAKHDKIVIVEKSIEGGGEY). Positions 262, 275, and 277 each coordinate Mg(2+).

It belongs to the D-alanine--D-alanine ligase family. Mg(2+) serves as cofactor. Mn(2+) is required as a cofactor.

It is found in the cytoplasm. It carries out the reaction 2 D-alanine + ATP = D-alanyl-D-alanine + ADP + phosphate + H(+). It participates in cell wall biogenesis; peptidoglycan biosynthesis. Cell wall formation. This chain is D-alanine--D-alanine ligase, found in Burkholderia pseudomallei (strain 668).